The sequence spans 475 residues: Tubulin epsilon chain (475 aa).

148–154 (GGGTGSG) provides a ligand contact to GTP.

It belongs to the tubulin family. As to quaternary structure, found in a complex with TEDC1, TEDC2, TUBE1 and TUBD1.

It localises to the cytoplasm. The protein resides in the cytoskeleton. Its subcellular location is the microtubule organizing center. The protein localises to the centrosome. The polypeptide is Tubulin epsilon chain (Tube1) (Mus musculus (Mouse)).